Here is a 509-residue protein sequence, read N- to C-terminus: Cobyric acid synthase (509 aa).

The region spanning 262–459 is the GATase cobBQ-type domain; it reads EIKVGIIKLP…IHGIFENDNW (198 aa). Cys-343 functions as the Nucleophile in the catalytic mechanism. Residue His-451 is part of the active site.

This sequence belongs to the CobB/CobQ family. CobQ subfamily.

It participates in cofactor biosynthesis; adenosylcobalamin biosynthesis. Its function is as follows. Catalyzes amidations at positions B, D, E, and G on adenosylcobyrinic A,C-diamide. NH(2) groups are provided by glutamine, and one molecule of ATP is hydrogenolyzed for each amidation. The protein is Cobyric acid synthase of Prochlorococcus marinus (strain AS9601).